The sequence spans 494 residues: Cytochrome P450 2A13 (494 aa).

Asparagine 297 is a binding site for substrate. Cysteine 439 serves as a coordination point for heme.

The protein belongs to the cytochrome P450 family. Heme is required as a cofactor. As to expression, expressed in liver and a number of extrahepatic tissues, including nasal mucosa, lung, trachea, brain, mammary gland, prostate, testis, and uterus, but not in heart, kidney, bone marrow, colon, small intestine, spleen, stomach, thymus, or skeletal muscle.

It localises to the endoplasmic reticulum membrane. It is found in the microsome membrane. It catalyses the reaction an organic molecule + reduced [NADPH--hemoprotein reductase] + O2 = an alcohol + oxidized [NADPH--hemoprotein reductase] + H2O + H(+). Its function is as follows. Exhibits a coumarin 7-hydroxylase activity. Active in the metabolic activation of hexamethylphosphoramide, N,N-dimethylaniline, 2'-methoxyacetophenone, N-nitrosomethylphenylamine, and the tobacco-specific carcinogen, 4-(methylnitrosamino)-1-(3-pyridyl)-1-butanone. Possesses phenacetin O-deethylation activity. In Homo sapiens (Human), this protein is Cytochrome P450 2A13 (CYP2A13).